Here is a 108-residue protein sequence, read N- to C-terminus: Small ribosomal subunit protein uS10 (108 aa).

The protein belongs to the universal ribosomal protein uS10 family. In terms of assembly, part of the 30S ribosomal subunit.

Involved in the binding of tRNA to the ribosomes. The polypeptide is Small ribosomal subunit protein uS10 (Rhodopirellula baltica (strain DSM 10527 / NCIMB 13988 / SH1)).